Consider the following 95-residue polypeptide: Co-chaperonin GroES (95 aa).

The protein belongs to the GroES chaperonin family. In terms of assembly, heptamer of 7 subunits arranged in a ring. Interacts with the chaperonin GroEL.

Its subcellular location is the cytoplasm. Its function is as follows. Together with the chaperonin GroEL, plays an essential role in assisting protein folding. The GroEL-GroES system forms a nano-cage that allows encapsulation of the non-native substrate proteins and provides a physical environment optimized to promote and accelerate protein folding. GroES binds to the apical surface of the GroEL ring, thereby capping the opening of the GroEL channel. In Syntrophotalea carbinolica (strain DSM 2380 / NBRC 103641 / GraBd1) (Pelobacter carbinolicus), this protein is Co-chaperonin GroES.